The chain runs to 409 residues: MSVFDSKFNGIHVYSEIGELETVLVHEPGREIDYITPARLDELLFSAILESHDARKEHQSFVKIMKDRGINVVELTDLVAETYDLASKAAKEEFIETFLEETVPVLTEANKKAVRAFLLSKPTHEMVEFMMSGITKYELGVESENELIVDPMPNLYFTRDPFASVGNGVTIHFMRYIVRRRETLFARFVFRNHPKLVKTPWYYDPAMKMPIEGGDVFIYNNETLVVGVSERTDLDTITLLAKNIKANKEVEFKRIVAINVPKWTNLMHLDTWLTMLDKNKFLYSPIANDVFKFWDYDLVNGGAEPQPQLNGLPLDKLLASIINKEPVLIPIGGAGATEMEIARETNFDGTNYLAIKPGLVIGYDRNEKTNAALKAAGITVLPFHGNQLSLGMGNARCMSMPLSRKDVKW.

Cysteine 397 serves as the catalytic Amidino-cysteine intermediate.

Belongs to the arginine deiminase family.

Its subcellular location is the cytoplasm. The enzyme catalyses L-arginine + H2O = L-citrulline + NH4(+). The protein operates within amino-acid degradation; L-arginine degradation via ADI pathway; carbamoyl phosphate from L-arginine: step 1/2. This is Arginine deiminase (arcA) from Metamycoplasma hominis (Mycoplasma hominis).